The following is a 502-amino-acid chain: T-complex protein 11-like X-linked protein 1 (502 aa).

Positions 1-36 (MPKTEETVLQNDPSVAENGAPEPKTPGQSQKSKSFC) are disordered.

The protein belongs to the TCP11 family.

In Homo sapiens (Human), this protein is T-complex protein 11-like X-linked protein 1.